Consider the following 122-residue polypeptide: Small ribosomal subunit protein uS13 (122 aa).

The segment at 94-122 (LSLPVRGQRTKTNSRTRKGKRKTVAGKKK) is disordered. Residues 101-122 (QRTKTNSRTRKGKRKTVAGKKK) are compositionally biased toward basic residues.

It belongs to the universal ribosomal protein uS13 family. Part of the 30S ribosomal subunit. Forms a loose heterodimer with protein S19. Forms two bridges to the 50S subunit in the 70S ribosome.

Located at the top of the head of the 30S subunit, it contacts several helices of the 16S rRNA. In the 70S ribosome it contacts the 23S rRNA (bridge B1a) and protein L5 of the 50S subunit (bridge B1b), connecting the 2 subunits; these bridges are implicated in subunit movement. Contacts the tRNAs in the A and P-sites. This chain is Small ribosomal subunit protein uS13, found in Chlamydia muridarum (strain MoPn / Nigg).